Here is a 293-residue protein sequence, read N- to C-terminus: Elongation factor Ts (293 aa).

An involved in Mg(2+) ion dislocation from EF-Tu region spans residues 80–83 (TDFV).

Belongs to the EF-Ts family.

Its subcellular location is the cytoplasm. Associates with the EF-Tu.GDP complex and induces the exchange of GDP to GTP. It remains bound to the aminoacyl-tRNA.EF-Tu.GTP complex up to the GTP hydrolysis stage on the ribosome. The chain is Elongation factor Ts from Herminiimonas arsenicoxydans.